The following is a 112-amino-acid chain: MPRKRMIGVVVSDKMDKTVVVAVERHVQHPLYKKYIKRTKKYHAHDEKNECRVGDVVEIEETRPLSKTKRWRVVKIIKRFEPERILKEEEEVQDELEEIEGEVVEEKGGAES.

It belongs to the universal ribosomal protein uS17 family. In terms of assembly, part of the 30S ribosomal subunit.

Its function is as follows. One of the primary rRNA binding proteins, it binds specifically to the 5'-end of 16S ribosomal RNA. This is Small ribosomal subunit protein uS17 from Thermotoga neapolitana (strain ATCC 49049 / DSM 4359 / NBRC 107923 / NS-E).